The primary structure comprises 404 residues: NADH-quinone oxidoreductase subunit D 2 (404 aa).

Belongs to the complex I 49 kDa subunit family. NDH-1 is composed of 14 different subunits. Subunits NuoB, C, D, E, F, and G constitute the peripheral sector of the complex.

It localises to the cell inner membrane. The enzyme catalyses a quinone + NADH + 5 H(+)(in) = a quinol + NAD(+) + 4 H(+)(out). Its function is as follows. NDH-1 shuttles electrons from NADH, via FMN and iron-sulfur (Fe-S) centers, to quinones in the respiratory chain. The immediate electron acceptor for the enzyme in this species is believed to be ubiquinone. Couples the redox reaction to proton translocation (for every two electrons transferred, four hydrogen ions are translocated across the cytoplasmic membrane), and thus conserves the redox energy in a proton gradient. In Rhizobium etli (strain CIAT 652), this protein is NADH-quinone oxidoreductase subunit D 2.